A 220-amino-acid polypeptide reads, in one-letter code: N-(5'-phosphoribosyl)anthranilate isomerase (220 aa).

The protein belongs to the TrpF family.

It carries out the reaction N-(5-phospho-beta-D-ribosyl)anthranilate = 1-(2-carboxyphenylamino)-1-deoxy-D-ribulose 5-phosphate. It functions in the pathway amino-acid biosynthesis; L-tryptophan biosynthesis; L-tryptophan from chorismate: step 3/5. The polypeptide is N-(5'-phosphoribosyl)anthranilate isomerase (Leptothrix cholodnii (strain ATCC 51168 / LMG 8142 / SP-6) (Leptothrix discophora (strain SP-6))).